The chain runs to 208 residues: Interleukin-6 (208 aa).

The signal sequence occupies residues 1 to 29 (MNSLFTSAFSPLAVSLGLLLVMTSAFPTP). Asparagine 38 carries an N-linked (GlcNAc...) asparagine glycan. Cysteine 72 and cysteine 78 form a disulfide bridge. Serine 81 is modified (phosphoserine). An intrachain disulfide couples cysteine 101 to cysteine 111.

This sequence belongs to the IL-6 superfamily. Component of a hexamer of two molecules each of IL6, IL6R and IL6ST; first binds to IL6R to associate with the signaling subunit IL6ST. Interacts with IL6R (via the N-terminal ectodomain); this interaction may be affected by IL6R-binding with SORL1, hence decreasing IL6 cis signaling. Interacts with SORL1 (via the N-terminal ectodomain); this interaction leads to IL6 internalization and lysosomal degradation. May form a trimeric complex with the soluble SORL1 ectodomain and soluble IL6R receptor; this interaction might stabilize circulating IL6, hence promoting IL6 trans signaling.

The protein localises to the secreted. Functionally, cytokine with a wide variety of biological functions in immunity, tissue regeneration, and metabolism. Binds to IL6R, then the complex associates to the signaling subunit IL6ST/gp130 to trigger the intracellular IL6-signaling pathway. The interaction with the membrane-bound IL6R and IL6ST stimulates 'classic signaling', whereas the binding of IL6 and soluble IL6R to IL6ST stimulates 'trans-signaling'. Alternatively, 'cluster signaling' occurs when membrane-bound IL6:IL6R complexes on transmitter cells activate IL6ST receptors on neighboring receiver cells. IL6 is a potent inducer of the acute phase response. Rapid production of IL6 contributes to host defense during infection and tissue injury, but excessive IL6 synthesis is involved in disease pathology. In the innate immune response, is synthesized by myeloid cells, such as macrophages and dendritic cells, upon recognition of pathogens through toll-like receptors (TLRs) at the site of infection or tissue injury. In the adaptive immune response, is required for the differentiation of B cells into immunoglobulin-secreting cells. Plays a major role in the differentiation of CD4(+) T cell subsets. Essential factor for the development of T follicular helper (Tfh) cells that are required for the induction of germinal-center formation. Required to drive naive CD4(+) T cells to the Th17 lineage. Also required for proliferation of myeloma cells and the survival of plasmablast cells. Its function is as follows. Acts as an essential factor in bone homeostasis and on vessels directly or indirectly by induction of VEGF, resulting in increased angiogenesis activity and vascular permeability. Induces, through 'trans-signaling' and synergistically with IL1B and TNF, the production of VEGF. Involved in metabolic controls, is discharged into the bloodstream after muscle contraction increasing lipolysis and improving insulin resistance. 'Trans-signaling' in central nervous system also regulates energy and glucose homeostasis. Mediates, through GLP-1, crosstalk between insulin-sensitive tissues, intestinal L cells and pancreatic islets to adapt to changes in insulin demand. Also acts as a myokine. Plays a protective role during liver injury, being required for maintenance of tissue regeneration. Also has a pivotal role in iron metabolism by regulating HAMP/hepcidin expression upon inflammation or bacterial infection. Through activation of IL6ST-YAP-NOTCH pathway, induces inflammation-induced epithelial regeneration. This chain is Interleukin-6 (IL6), found in Capra hircus (Goat).